A 201-amino-acid chain; its full sequence is Probable chemoreceptor glutamine deamidase CheD 1 (201 aa).

This sequence belongs to the CheD family.

The catalysed reaction is L-glutaminyl-[protein] + H2O = L-glutamyl-[protein] + NH4(+). In terms of biological role, probably deamidates glutamine residues to glutamate on methyl-accepting chemotaxis receptors (MCPs), playing an important role in chemotaxis. This chain is Probable chemoreceptor glutamine deamidase CheD 1, found in Geobacter sulfurreducens (strain ATCC 51573 / DSM 12127 / PCA).